A 491-amino-acid polypeptide reads, in one-letter code: Protein nucleotidyltransferase YdiU (491 aa).

ATP-binding residues include glycine 88, glycine 90, arginine 91, lysine 111, aspartate 123, glycine 124, arginine 174, and arginine 181. Residue aspartate 250 is the Proton acceptor of the active site. 2 residues coordinate Mg(2+): asparagine 251 and aspartate 260. Residue aspartate 260 participates in ATP binding. Basic and acidic residues predominate over residues 466 to 484 (DDQPDRADYAEPPQPEERV). Positions 466–491 (DDQPDRADYAEPPQPEERVLQTFCGT) are disordered.

Belongs to the SELO family. Mg(2+) serves as cofactor. Requires Mn(2+) as cofactor.

The enzyme catalyses L-seryl-[protein] + ATP = 3-O-(5'-adenylyl)-L-seryl-[protein] + diphosphate. The catalysed reaction is L-threonyl-[protein] + ATP = 3-O-(5'-adenylyl)-L-threonyl-[protein] + diphosphate. It catalyses the reaction L-tyrosyl-[protein] + ATP = O-(5'-adenylyl)-L-tyrosyl-[protein] + diphosphate. It carries out the reaction L-histidyl-[protein] + UTP = N(tele)-(5'-uridylyl)-L-histidyl-[protein] + diphosphate. The enzyme catalyses L-seryl-[protein] + UTP = O-(5'-uridylyl)-L-seryl-[protein] + diphosphate. The catalysed reaction is L-tyrosyl-[protein] + UTP = O-(5'-uridylyl)-L-tyrosyl-[protein] + diphosphate. In terms of biological role, nucleotidyltransferase involved in the post-translational modification of proteins. It can catalyze the addition of adenosine monophosphate (AMP) or uridine monophosphate (UMP) to a protein, resulting in modifications known as AMPylation and UMPylation. The protein is Protein nucleotidyltransferase YdiU of Bradyrhizobium sp. (strain ORS 278).